Consider the following 168-residue polypeptide: 2-C-methyl-D-erythritol 2,4-cyclodiphosphate synthase (168 aa).

A divalent metal cation-binding residues include D11 and H13. Residues 11–13 (DVH) and 41–42 (HS) contribute to the 4-CDP-2-C-methyl-D-erythritol 2-phosphate site. H49 contacts a divalent metal cation. Residues 63–65 (DIG), 68–72 (FPDTD), 139–142 (TTTE), F146, and R149 contribute to the 4-CDP-2-C-methyl-D-erythritol 2-phosphate site.

This sequence belongs to the IspF family. As to quaternary structure, homotrimer. The cofactor is a divalent metal cation.

The enzyme catalyses 4-CDP-2-C-methyl-D-erythritol 2-phosphate = 2-C-methyl-D-erythritol 2,4-cyclic diphosphate + CMP. Its pathway is isoprenoid biosynthesis; isopentenyl diphosphate biosynthesis via DXP pathway; isopentenyl diphosphate from 1-deoxy-D-xylulose 5-phosphate: step 4/6. Involved in the biosynthesis of isopentenyl diphosphate (IPP) and dimethylallyl diphosphate (DMAPP), two major building blocks of isoprenoid compounds. Catalyzes the conversion of 4-diphosphocytidyl-2-C-methyl-D-erythritol 2-phosphate (CDP-ME2P) to 2-C-methyl-D-erythritol 2,4-cyclodiphosphate (ME-CPP) with a corresponding release of cytidine 5-monophosphate (CMP). This Psychrobacter cryohalolentis (strain ATCC BAA-1226 / DSM 17306 / VKM B-2378 / K5) protein is 2-C-methyl-D-erythritol 2,4-cyclodiphosphate synthase.